A 667-amino-acid chain; its full sequence is Long-chain-fatty-acid--CoA ligase ACSBG2 (667 aa).

The span at 1–14 shows a compositional bias: basic and acidic residues; sequence MTQEKKAEDPDRGM. The disordered stretch occupies residues 1–20; it reads MTQEKKAEDPDRGMDTTSAA. Residues 227 to 235, 418 to 423, Asp496, Arg511, and Arg624 contribute to the ATP site; these read TSGTTGSPK and EIYGMT.

Belongs to the ATP-dependent AMP-binding enzyme family. Bubblegum subfamily.

The protein localises to the cytoplasm. Its subcellular location is the membrane. It catalyses the reaction a long-chain fatty acid + ATP + CoA = a long-chain fatty acyl-CoA + AMP + diphosphate. The catalysed reaction is (5Z,8Z,11Z,14Z)-eicosatetraenoate + ATP + CoA = (5Z,8Z,11Z,14Z)-eicosatetraenoyl-CoA + AMP + diphosphate. It carries out the reaction hexadecanoate + ATP + CoA = hexadecanoyl-CoA + AMP + diphosphate. The enzyme catalyses (9Z)-octadecenoate + ATP + CoA = (9Z)-octadecenoyl-CoA + AMP + diphosphate. It catalyses the reaction (9Z,12Z)-octadecadienoate + ATP + CoA = (9Z,12Z)-octadecadienoyl-CoA + AMP + diphosphate. The catalysed reaction is tetracosanoate + ATP + CoA = tetracosanoyl-CoA + AMP + diphosphate. In terms of biological role, catalyzes the conversion of fatty acids such as long chain and very long-chain fatty acids to their active form acyl-CoAs for both synthesis of cellular lipids, and degradation via beta-oxidation. Can activate diverse saturated, monosaturated and polyunsaturated fatty acids. Has increased ability to activate oleic and linoleic acid. May play a role in spermatogenesis. The sequence is that of Long-chain-fatty-acid--CoA ligase ACSBG2 from Rattus norvegicus (Rat).